The primary structure comprises 394 residues: Glycogen synthase kinase 1 (394 aa).

The 284-residue stretch at 35 to 318 (YTQCKIVGNG…AIDAMVHPFF (284 aa)) folds into the Protein kinase domain. ATP contacts are provided by residues 41 to 49 (VGNGSFGVV) and lysine 64.

Belongs to the protein kinase superfamily. CMGC Ser/Thr protein kinase family. GSK-3 subfamily.

It is found in the cytoplasm. The enzyme catalyses L-seryl-[protein] + ATP = O-phospho-L-seryl-[protein] + ADP + H(+). Functionally, protein kinase that acts downstream of the MPS1 MAPK cascade as a highly conservative signal modulator that dictates growth, conidiation and pathogenicity. Phosphorylates HAT1 at 'Ser-8' to block its translocation from the nucleus to the cytoplasm where HAT1 positively regulates appressorium development and pathogenicity. The polypeptide is Glycogen synthase kinase 1 (Pyricularia oryzae (Rice blast fungus)).